Consider the following 90-residue polypeptide: Small ribosomal subunit protein bS20 (90 aa).

The disordered stretch occupies residues 1-25; it reads MANSPSAKKRAKQAEKRRSHNASLR. Positions 7 to 20 are enriched in basic residues; the sequence is AKKRAKQAEKRRSH.

The protein belongs to the bacterial ribosomal protein bS20 family.

Its function is as follows. Binds directly to 16S ribosomal RNA. This chain is Small ribosomal subunit protein bS20, found in Pseudomonas fluorescens (strain Pf0-1).